Consider the following 472-residue polypeptide: Ras-GEF domain-containing family member 1B (472 aa).

Residues 34 to 164 (HDNNLLSGSL…MMQCLIRKLA (131 aa)) form the N-terminal Ras-GEF domain. The Ras-GEF domain occupies 204 to 452 (DPYTLAQQLT…YLASYESEGP (249 aa)).

As to quaternary structure, interacts with CCDC124 during cytokinesis. Interacts with Ras family proteins.

It is found in the early endosome. Its subcellular location is the late endosome. The protein resides in the midbody. In terms of biological role, guanine nucleotide exchange factor (GEF) with specificity for RAP2A, it doesn't seems to activate other Ras family proteins (in vitro). This is Ras-GEF domain-containing family member 1B (RASGEF1B) from Pongo abelii (Sumatran orangutan).